Here is a 469-residue protein sequence, read N- to C-terminus: Adenosylhomocysteinase (469 aa).

Substrate-binding residues include threonine 63, aspartate 139, and glutamate 164. Residue 165–167 participates in NAD(+) binding; that stretch reads TTT. 2 residues coordinate substrate: lysine 194 and aspartate 198. NAD(+)-binding positions include asparagine 199, 228–233, glutamate 251, asparagine 300, 321–323, and asparagine 375; these read GYGDVG and IGH.

It belongs to the adenosylhomocysteinase family. It depends on NAD(+) as a cofactor.

The protein localises to the cytoplasm. It carries out the reaction S-adenosyl-L-homocysteine + H2O = L-homocysteine + adenosine. Its pathway is amino-acid biosynthesis; L-homocysteine biosynthesis; L-homocysteine from S-adenosyl-L-homocysteine: step 1/1. Functionally, may play a key role in the regulation of the intracellular concentration of adenosylhomocysteine. In Pseudomonas putida (strain W619), this protein is Adenosylhomocysteinase.